The primary structure comprises 178 residues: MSRIGKRIIEIPSSVQASVEGSKLLFKNSKEKHELETHNRVKITLENNQLSFQPVGEDAQSRAYWGTYGALANNIVIGLSTGFSKTLEVNGVGYKVALGNKTLDLSLGFSHPVKYPIPAGIEMVVEKNTITIKGSDKQKVGQVAAEIRSFRPPEPYKGKGVKYSNEVIIRKAGKTAKK.

It belongs to the universal ribosomal protein uL6 family. Part of the 50S ribosomal subunit.

This protein binds to the 23S rRNA, and is important in its secondary structure. It is located near the subunit interface in the base of the L7/L12 stalk, and near the tRNA binding site of the peptidyltransferase center. The sequence is that of Large ribosomal subunit protein uL6 from Helicobacter pylori (strain P12).